A 157-amino-acid chain; its full sequence is Small ribosomal subunit protein uS7 (157 aa).

Belongs to the universal ribosomal protein uS7 family. In terms of assembly, part of the 30S ribosomal subunit. Contacts proteins S9 and S11.

Functionally, one of the primary rRNA binding proteins, it binds directly to 16S rRNA where it nucleates assembly of the head domain of the 30S subunit. Is located at the subunit interface close to the decoding center, probably blocks exit of the E-site tRNA. This chain is Small ribosomal subunit protein uS7, found in Chloroflexus aggregans (strain MD-66 / DSM 9485).